We begin with the raw amino-acid sequence, 235 residues long: MMIKLIVNADDFGLTEGTNYGIIDGHINGLVNSTTMMMNMPGTEHAVRLAKEYKTLGVGVHLVLTAGKPLLGDVPSLVSSDGLFHKQSVVWEGKVNPEEVEREWTAQIEKFLSYGLKPTHLDSHHHVHGLPILHDVLERLAATYNVPIRRCEEERAVRPFSDLFYSDFYADGVTEDYFVKLKERVQGEQTVEIMVHPAYIDPELVKRSSYVMDRVKELRILTESELPEGIELVKF.

Residues histidine 61 and histidine 124 each contribute to the Mg(2+) site.

Belongs to the YdjC deacetylase family. Mg(2+) is required as a cofactor.

Functionally, probably catalyzes the deacetylation of acetylated carbohydrates an important step in the degradation of oligosaccharides. This chain is Carbohydrate deacetylase, found in Bacillus cereus (strain 03BB102).